Here is a 272-residue protein sequence, read N- to C-terminus: Zinc transporter ZupT (272 aa).

The next 8 helical transmembrane spans lie at 12–32, 40–60, 76–96, 126–146, 158–178, 187–207, 211–231, and 247–267; these read ALAV…MVVF, LLAF…LSEI, LGFT…MVID, LLTA…TFFA, AFAI…PVYF, FGAS…GYLL, VLSE…MVFL, and HETV…LVLF. Positions 136 and 139 each coordinate Fe(2+). Zn(2+)-binding residues include Glu139 and His164. Positions 165, 168, and 197 each coordinate Fe(2+). A Zn(2+)-binding site is contributed by Glu168.

Belongs to the ZIP transporter (TC 2.A.5) family. ZupT subfamily.

The protein localises to the cell inner membrane. The enzyme catalyses Zn(2+)(in) = Zn(2+)(out). Its function is as follows. Mediates zinc uptake. May also transport other divalent cations. The chain is Zinc transporter ZupT from Xanthomonas campestris pv. campestris (strain ATCC 33913 / DSM 3586 / NCPPB 528 / LMG 568 / P 25).